Consider the following 111-residue polypeptide: Ig heavy chain V-III region HPC76 (111 aa).

Residues 1–110 (ESGGGLVQPG…WGQGTTLTVS (110 aa)) enclose the Ig-like domain.

In Mus musculus (Mouse), this protein is Ig heavy chain V-III region HPC76.